Here is a 152-residue protein sequence, read N- to C-terminus: 3-dehydroquinate dehydratase (152 aa).

Tyr23 serves as the catalytic Proton acceptor. Substrate contacts are provided by Asn74, His80, and Asp87. The Proton donor role is filled by His100. Residues 101–102 and Arg111 each bind substrate; that span reads LS.

This sequence belongs to the type-II 3-dehydroquinase family. As to quaternary structure, homododecamer.

The catalysed reaction is 3-dehydroquinate = 3-dehydroshikimate + H2O. It participates in metabolic intermediate biosynthesis; chorismate biosynthesis; chorismate from D-erythrose 4-phosphate and phosphoenolpyruvate: step 3/7. In terms of biological role, catalyzes a trans-dehydration via an enolate intermediate. The sequence is that of 3-dehydroquinate dehydratase from Clostridium botulinum (strain Langeland / NCTC 10281 / Type F).